Reading from the N-terminus, the 338-residue chain is 4-hydroxythreonine-4-phosphate dehydrogenase (338 aa).

Residues histidine 136 and threonine 137 each contribute to the substrate site. Residues histidine 173, histidine 218, and histidine 273 each contribute to the a divalent metal cation site. Residues lysine 281, asparagine 290, and arginine 299 each contribute to the substrate site.

It belongs to the PdxA family. As to quaternary structure, homodimer. Requires Zn(2+) as cofactor. Mg(2+) serves as cofactor. The cofactor is Co(2+).

It is found in the cytoplasm. It catalyses the reaction 4-(phosphooxy)-L-threonine + NAD(+) = 3-amino-2-oxopropyl phosphate + CO2 + NADH. Its pathway is cofactor biosynthesis; pyridoxine 5'-phosphate biosynthesis; pyridoxine 5'-phosphate from D-erythrose 4-phosphate: step 4/5. Catalyzes the NAD(P)-dependent oxidation of 4-(phosphooxy)-L-threonine (HTP) into 2-amino-3-oxo-4-(phosphooxy)butyric acid which spontaneously decarboxylates to form 3-amino-2-oxopropyl phosphate (AHAP). The polypeptide is 4-hydroxythreonine-4-phosphate dehydrogenase (Ralstonia nicotianae (strain ATCC BAA-1114 / GMI1000) (Ralstonia solanacearum)).